The sequence spans 372 residues: Cell division protein FtsZ 1 (372 aa).

Residues 51–55 (GAGCN), 138–140 (GTG), Glu169, Arg173, and Asp216 contribute to the GTP site. Positions 351–372 (QEETPEPSEEEVPPVKIDIPEL) are disordered. The segment covering 353–362 (ETPEPSEEEV) has biased composition (acidic residues).

This sequence belongs to the FtsZ family. Homodimer. Polymerizes to form a dynamic ring structure in a strictly GTP-dependent manner. Interacts directly with several other division proteins.

The protein resides in the cytoplasm. Functionally, essential cell division protein that forms a contractile ring structure (Z ring) at the future cell division site. The regulation of the ring assembly controls the timing and the location of cell division. One of the functions of the FtsZ ring is to recruit other cell division proteins to the septum to produce a new cell wall between the dividing cells. Binds GTP and shows GTPase activity. The polypeptide is Cell division protein FtsZ 1 (Pyrococcus abyssi (strain GE5 / Orsay)).